The following is a 302-amino-acid chain: Glutaminase (302 aa).

Residues serine 61, asparagine 111, glutamate 155, asparagine 162, tyrosine 186, tyrosine 238, and valine 256 each coordinate substrate.

This sequence belongs to the glutaminase family. Homotetramer.

The enzyme catalyses L-glutamine + H2O = L-glutamate + NH4(+). The chain is Glutaminase from Pseudomonas fluorescens (strain ATCC BAA-477 / NRRL B-23932 / Pf-5).